Here is a 518-residue protein sequence, read N- to C-terminus: 2-isopropylmalate synthase (518 aa).

The 264-residue stretch at isoleucine 5–histidine 268 folds into the Pyruvate carboxyltransferase domain. Mn(2+) contacts are provided by aspartate 14, histidine 202, histidine 204, and asparagine 238. Residues threonine 393–valine 518 form a regulatory domain region.

It belongs to the alpha-IPM synthase/homocitrate synthase family. LeuA type 1 subfamily. As to quaternary structure, homodimer. The cofactor is Mn(2+).

It is found in the cytoplasm. It carries out the reaction 3-methyl-2-oxobutanoate + acetyl-CoA + H2O = (2S)-2-isopropylmalate + CoA + H(+). It functions in the pathway amino-acid biosynthesis; L-leucine biosynthesis; L-leucine from 3-methyl-2-oxobutanoate: step 1/4. Catalyzes the condensation of the acetyl group of acetyl-CoA with 3-methyl-2-oxobutanoate (2-ketoisovalerate) to form 3-carboxy-3-hydroxy-4-methylpentanoate (2-isopropylmalate). The protein is 2-isopropylmalate synthase of Pasteurella multocida (strain Pm70).